A 912-amino-acid polypeptide reads, in one-letter code: Glutamate receptor 3.2 (912 aa).

The signal sequence occupies residues M1 to G22. Topologically, residues A23–T587 are extracellular. N-linked (GlcNAc...) asparagine glycosylation is found at N306, N338, N378, N417, N435, N445, and N532. Residues D544–A546 and R551 contribute to the glycine site. L-methionine-binding positions include D544–A546 and R551. The helical transmembrane segment at P588 to L608 threads the bilayer. Residues E609–R617 lie on the Cytoplasmic side of the membrane. A helical membrane pass occupies residues G618–S638. Topologically, residues H639–R649 are cytoplasmic. Residues A650–L670 form a helical membrane-spanning segment. Residues T671–S828 lie on the Extracellular side of the membrane. A glycine-binding site is contributed by Y703. Position 703 (Y703) interacts with L-methionine. A glycan (N-linked (GlcNAc...) asparagine) is linked at N734. Glycine is bound at residue E743 to Y746. E743–Y746 is an L-methionine binding site. Residues C755 and C809 are joined by a disulfide bond. N-linked (GlcNAc...) asparagine glycans are attached at residues N808 and N813. A helical transmembrane segment spans residues F829–F849. The Cytoplasmic segment spans residues K850–I912. The disordered stretch occupies residues K888 to I912.

This sequence belongs to the glutamate-gated ion channel (TC 1.A.10.1) family. Forms a heteromeric channel with GLR3.4. In terms of tissue distribution, expressed in leaves and siliques, and at lower level in flowers and roots. Detected in the vascular tissues of both shoots and roots. Expressed in root phloem.

The protein resides in the cell membrane. In terms of biological role, glutamate-gated receptor that probably acts as a non-selective cation channel. May be involved in light-signal transduction and calcium homeostasis via the regulation of calcium influx into cells. Could play a role in calcium unloading from the xylem vessels. Acts as a negative regulator of lateral root initiation and development. May restrict primordia numbers and position along the root axis by a signaling process originating in the phloem. In Arabidopsis thaliana (Mouse-ear cress), this protein is Glutamate receptor 3.2.